Reading from the N-terminus, the 273-residue chain is Proteasome subunit beta type-7-A (273 aa).

Positions 1–37 are cleaved as a propeptide — removed in mature form; that stretch reads MSQSTVDVPPKGGFSFDLCKRNDMLTQKGLKAPSFLK. The active-site Nucleophile is Thr-40.

The protein belongs to the peptidase T1B family. Component of the 20S core complex of the 26S proteasome. The 26S proteasome is composed of a core protease (CP), known as the 20S proteasome, capped at one or both ends by the 19S regulatory particle (RP/PA700). The 20S proteasome core is composed of 28 subunits that are arranged in four stacked rings, resulting in a barrel-shaped structure. The two end rings are each formed by seven alpha subunits, and the two central rings are each formed by seven beta subunits. The catalytic chamber with the active sites is on the inside of the barrel.

It localises to the cytoplasm. Its subcellular location is the nucleus. The catalysed reaction is Cleavage of peptide bonds with very broad specificity.. The proteasome is a multicatalytic proteinase complex which is characterized by its ability to cleave peptides with Arg, Phe, Tyr, Leu, and Glu adjacent to the leaving group at neutral or slightly basic pH. The proteasome has an ATP-dependent proteolytic activity. The chain is Proteasome subunit beta type-7-A (PBB1) from Arabidopsis thaliana (Mouse-ear cress).